The sequence spans 658 residues: Probable CoA ligase CCL6 (658 aa).

ATP is bound by residues Thr-226–Lys-234, Gln-411–Thr-416, Asp-497, Ile-509–Arg-512, and Lys-632. The interval Asp-298–Gln-411 is SBD1. Residues Gly-412 to Tyr-477 are SBD2.

This sequence belongs to the ATP-dependent AMP-binding enzyme family. As to expression, mostly expressed in glandular trichomes (lupulin glands) after flowering, and, to a lower extent, in stems, leaves, cones and flowers.

The protein resides in the cytoplasm. It is found in the cytosol. This is Probable CoA ligase CCL6 from Humulus lupulus (European hop).